The chain runs to 160 residues: Transcription elongation factor GreA (160 aa).

Positions 53–73 (AREEQGMVEARIRDIEGRLQN) form a coiled coil.

It belongs to the GreA/GreB family.

Functionally, necessary for efficient RNA polymerase transcription elongation past template-encoded arresting sites. The arresting sites in DNA have the property of trapping a certain fraction of elongating RNA polymerases that pass through, resulting in locked ternary complexes. Cleavage of the nascent transcript by cleavage factors such as GreA or GreB allows the resumption of elongation from the new 3'terminus. GreA releases sequences of 2 to 3 nucleotides. This is Transcription elongation factor GreA from Pseudomonas putida (strain ATCC 47054 / DSM 6125 / CFBP 8728 / NCIMB 11950 / KT2440).